The following is a 727-amino-acid chain: Synaptic vesicle glycoprotein 2C (727 aa).

Positions 1 to 57 (MEDSYKDRTSLMKGAKDIAREVKKQTVKKVNQAVDRAQDEYTQRSYSRFQDEEDDDD) are interaction with SYT1. The Cytoplasmic segment spans residues 1–154 (MEDSYKDRTS…CGHGRFQWAL (154 aa)). Disordered stretches follow at residues 24–84 (KQTV…GHDE) and 109–128 (VGQP…SERR). Serine 75 and serine 76 each carry phosphoserine. Threonine 79 bears the Phosphothreonine mark. A compositionally biased stretch (basic and acidic residues) spans 113–128 (KGDEYKDRRELESERR). The helical transmembrane segment at 155–175 (FFVLGMALMADGVEVFVVGFV) threads the bilayer. Over 176–191 (LPSAETDLCIPNSGSG) the chain is Extracellular. The chain crosses the membrane as a helical span at residues 192–212 (WLGSIVYLGMMVGAFFWGGLA). Topologically, residues 213-226 (DKVGRKQSLLICMS) are cytoplasmic. A helical transmembrane segment spans residues 227–247 (VNGFFAFLSSFVQGYGFFLFC). Residue arginine 248 is a topological domain, extracellular. A helical membrane pass occupies residues 249-269 (LLSGFGIGGAIPTVFSYFAEV). At 270-280 (LAREKRGEHLS) the chain is on the cytoplasmic side. Residues 281 to 301 (WLCMFWMIGGIYASAMAWAII) form a helical membrane-spanning segment. Over 302-320 (PHYGWSFSMGSAYQFHSWR) the chain is Extracellular. Residues 321 to 341 (VFVIVCALPCVSSVVALTFMP) form a helical membrane-spanning segment. Topologically, residues 342–437 (ESPRFLLEVG…PVRDNTIKLT (96 aa)) are cytoplasmic. The chain crosses the membrane as a helical span at residues 438-458 (IVWFTLSFGYYGLSVWFPDVI). Residues 459-578 (KPLQSDEYAL…CQITFDDDYS (120 aa)) lie on the Extracellular side of the membrane. Tyrosine 466 carries the post-translational modification Phosphotyrosine. N-linked (GlcNAc...) asparagine glycosylation is found at asparagine 480, asparagine 484, asparagine 534, asparagine 559, and asparagine 565. Residues 519 to 563 (SCTFEDVTSVNTYFKNCTFIDTVFDNTDFEPYKFIDSEFKNCSFF) are (Microbial infection) C.botulinum neurotoxin type A-binding. A helical membrane pass occupies residues 579–599 (AYWIYFVNFLGTLAVLPGNIV). The Cytoplasmic portion of the chain corresponds to 600-609 (SALLMDRIGR). Residues 610–630 (LTMLGGSMVLSGISCFFLWFG) form a helical membrane-spanning segment. Topologically, residues 631 to 636 (TSESMM) are extracellular. A helical membrane pass occupies residues 637 to 657 (IGMLCLYNGLTISAWNSLDVV). The Cytoplasmic segment spans residues 658-669 (TVELYPTDRRAT). Residues 670 to 690 (GFGFLNALCKAAAVLGNLIFG) form a helical membrane-spanning segment. Over 691–698 (SLVSITKS) the chain is Extracellular. Residues 699 to 719 (IPILLASTVLVCGGLVGLCLP) form a helical membrane-spanning segment. Residues 720–727 (DTRTQVLM) lie on the Cytoplasmic side of the membrane.

It belongs to the major facilitator superfamily. In terms of assembly, interacts with SYT1 in a calcium-dependent manner. As to quaternary structure, (Microbial infection) Interacts with C.botulinum neurotoxin type A1 and type A2 (BoNT/A, botA). Interaction is improved by glycosylation of SV2. Post-translationally, N-glycosylated. Upon expression in a kidney cell line the most abundant glycan on Asn-534 is GlcNAc(3)Hex(5), while on Asn-559 and Asn-565 the most abundant glycan is GlcNAc2Fuc1Man3GlcNAc3Gal3. Both Asn-559 and Asn-565 have a high degree of glycan heterogeneity.

The protein localises to the cytoplasmic vesicle. It localises to the secretory vesicle. It is found in the synaptic vesicle membrane. In terms of biological role, plays a role in the control of regulated secretion in neural and endocrine cells, enhancing selectively low-frequency neurotransmission. Positively regulates vesicle fusion by maintaining the readily releasable pool of secretory vesicles. Its function is as follows. (Microbial infection) Receptor for C.botulinum neurotoxin type A (BoNT/A, botA); the toxin probably binds via extracellular loop 4. Recognition by BoNT/A relies on both protein-protein and protein-N-glycosylation; glycosylation of Asn-559 increases its affinity for BoNT/A. Also serves as a receptor for the closely related C.botulinum neurotoxin type A2; glycosylation is not essential but enhances the interaction. (Microbial infection) Possible receptor for C.botulinum neurotoxin type D (BoNT/D, botD); note that type D does not usually infect humans. In Homo sapiens (Human), this protein is Synaptic vesicle glycoprotein 2C (SV2C).